A 130-amino-acid chain; its full sequence is Small ribosomal subunit protein uS11 (130 aa).

The protein belongs to the universal ribosomal protein uS11 family. In terms of assembly, part of the 30S ribosomal subunit. Interacts with proteins S7 and S18. Binds to IF-3.

Its function is as follows. Located on the platform of the 30S subunit, it bridges several disparate RNA helices of the 16S rRNA. Forms part of the Shine-Dalgarno cleft in the 70S ribosome. This is Small ribosomal subunit protein uS11 from Prochlorococcus marinus (strain NATL2A).